Reading from the N-terminus, the 170-residue chain is Shikimate kinase (170 aa).

11–16 serves as a coordination point for ATP; sequence LSGKST. Ser15 contacts Mg(2+). Substrate is bound by residues Asp33, Arg57, and Gly79. ATP is bound at residue Arg119. Arg137 provides a ligand contact to substrate.

The protein belongs to the shikimate kinase family. Monomer. It depends on Mg(2+) as a cofactor.

It is found in the cytoplasm. It catalyses the reaction shikimate + ATP = 3-phosphoshikimate + ADP + H(+). It functions in the pathway metabolic intermediate biosynthesis; chorismate biosynthesis; chorismate from D-erythrose 4-phosphate and phosphoenolpyruvate: step 5/7. Its function is as follows. Catalyzes the specific phosphorylation of the 3-hydroxyl group of shikimic acid using ATP as a cosubstrate. This chain is Shikimate kinase, found in Clostridium botulinum (strain Loch Maree / Type A3).